We begin with the raw amino-acid sequence, 485 residues long: Tektin-5 (485 aa).

Coiled coils occupy residues 113–185, 225–251, 342–385, and 423–443; these read SRLT…EVNC, QQQMRKLAQRIDLQMRDNRDAQHALER, FNAR…MAKE, and DDTLQTLKLRLRETQDMLQLL.

It belongs to the tektin family. As to quaternary structure, microtubule inner protein component of sperm flagellar doublet microtubules. Interacts with TEKT3. Post-translationally, ubiquitinated, leading to its degradation. Deubiquitinated by USP16, promoting its stability.

It localises to the cytoplasm. The protein localises to the cytoskeleton. Its subcellular location is the flagellum axoneme. Functionally, sperm-specific microtubule inner protein (MIP) part of the dynein-decorated doublet microtubules (DMTs) in flagellar axoneme. Forms an extensive interaction network in different conformations that reinforces the helix bundle composed by other tektin proteins (TEKT1 to TEKT4) and MIPs to anchor the tektin bundle onto the tubulin wall of A-tubule of the sperm flagellum. The polypeptide is Tektin-5 (TEKT5) (Macaca fascicularis (Crab-eating macaque)).